We begin with the raw amino-acid sequence, 505 residues long: Ent-kaurene oxidase 2 (505 aa).

The chain crosses the membrane as a helical span at residues 3 to 23 (AFVPGGAGAAAAAVGGFVAAA). Residue Cys-449 coordinates heme.

It belongs to the cytochrome P450 family. The cofactor is heme. In terms of tissue distribution, widely expressed.

It localises to the membrane. It catalyses the reaction ent-kaur-16-ene + 3 reduced [NADPH--hemoprotein reductase] + 3 O2 = ent-kaur-16-en-19-oate + 3 oxidized [NADPH--hemoprotein reductase] + 4 H2O + 4 H(+). Its pathway is plant hormone biosynthesis; gibberellin biosynthesis. In terms of biological role, catalyzes three successive oxidations of the 4-methyl group of ent-kaurene giving kaurenoic acid, a key step in gibberellins (GAs) biosynthesis. GAs, which are involved many processes, including stem elongation, play a central role in plant development. The protein is Ent-kaurene oxidase 2 of Oryza sativa subsp. japonica (Rice).